Here is a 283-residue protein sequence, read N- to C-terminus: Formamidopyrimidine-DNA glycosylase (283 aa).

Proline 2 functions as the Schiff-base intermediate with DNA in the catalytic mechanism. Glutamate 3 serves as the catalytic Proton donor. Catalysis depends on lysine 58, which acts as the Proton donor; for beta-elimination activity. Histidine 100, arginine 119, and arginine 162 together coordinate DNA. An FPG-type zinc finger spans residues 247-283 (DVYGREGEPCRRAGCDGTVQRITQSGRSSFYCAQCQR). Residue arginine 273 is the Proton donor; for delta-elimination activity of the active site.

The protein belongs to the FPG family. As to quaternary structure, monomer. Zn(2+) serves as cofactor.

The enzyme catalyses Hydrolysis of DNA containing ring-opened 7-methylguanine residues, releasing 2,6-diamino-4-hydroxy-5-(N-methyl)formamidopyrimidine.. It carries out the reaction 2'-deoxyribonucleotide-(2'-deoxyribose 5'-phosphate)-2'-deoxyribonucleotide-DNA = a 3'-end 2'-deoxyribonucleotide-(2,3-dehydro-2,3-deoxyribose 5'-phosphate)-DNA + a 5'-end 5'-phospho-2'-deoxyribonucleoside-DNA + H(+). Functionally, involved in base excision repair of DNA damaged by oxidation or by mutagenic agents. Acts as a DNA glycosylase that recognizes and removes damaged bases. Has a preference for oxidized purines, such as 7,8-dihydro-8-oxoguanine (8-oxoG). Has AP (apurinic/apyrimidinic) lyase activity and introduces nicks in the DNA strand. Cleaves the DNA backbone by beta-delta elimination to generate a single-strand break at the site of the removed base with both 3'- and 5'-phosphates. This is Formamidopyrimidine-DNA glycosylase from Ruegeria pomeroyi (strain ATCC 700808 / DSM 15171 / DSS-3) (Silicibacter pomeroyi).